The chain runs to 646 residues: Peptidylprolyl isomerase domain and WD repeat-containing protein 1 (646 aa).

A disordered region spans residues 1–30 (MAAESGSDFQQRRRRRRDPEEPEKTELSER). A2 carries the N-acetylalanine modification. The segment covering 17-30 (RDPEEPEKTELSER) has biased composition (basic and acidic residues). WD repeat units follow at residues 80-118 (ASMY…FWKK), 124-162 (EFVK…VFDV), 168-208 (INML…IYDG), 213-252 (QPLH…YWTG), 271-309 (TDLY…IFRF), 345-386 (AVER…VETN), and 401-453 (MQLA…MFTK). Positions 455–478 (EPEDTKSADSDRDVFNEKPSKEEV) are enriched in basic and acidic residues. Positions 455–490 (EPEDTKSADSDRDVFNEKPSKEEVMAATQAEGPKRV) are disordered. In terms of domain architecture, PPIase cyclophilin-type spans 490 to 645 (VSDSAIIHTS…EDVSIINITV (156 aa)).

This sequence belongs to the cyclophilin-type PPIase family. PPIL1 subfamily. In terms of assembly, identified in the spliceosome C complex.

The protein resides in the nucleus. The enzyme catalyses [protein]-peptidylproline (omega=180) = [protein]-peptidylproline (omega=0). With respect to regulation, inhibited by cyclosporin A (CsA). Its function is as follows. PPIase that catalyzes the cis-trans isomerization of proline imidic peptide bonds in oligopeptides and may therefore assist protein folding. May be involved in pre-mRNA splicing. The protein is Peptidylprolyl isomerase domain and WD repeat-containing protein 1 of Homo sapiens (Human).